The primary structure comprises 532 residues: Muscarinic acetylcholine receptor M5 (532 aa).

Topologically, residues 1-29 are extracellular; the sequence is MEGDSYHNATTVNGTPVYHQPLERHRLWE. An N-linked (GlcNAc...) asparagine glycan is attached at Asn-8. Residues 30–53 traverse the membrane as a helical segment; that stretch reads VISIAAVTAVVSLITIVGNVLVMI. Residues 54–66 lie on the Cytoplasmic side of the membrane; sequence SFKVNSQLKTVNN. Residues 67 to 87 traverse the membrane as a helical segment; the sequence is YYLLSLACADLIIGIFSMNLY. The Extracellular segment spans residues 88-104; the sequence is TTYILMGRWALGSLACD. Cys-103 and Cys-183 form a disulfide bridge. Residues 105–126 form a helical membrane-spanning segment; that stretch reads LWLALDYVASNASVMNLLVISF. The Cytoplasmic segment spans residues 127–146; it reads DRYFSITRPLTYRAKRTPKR. Residues 147–169 traverse the membrane as a helical segment; it reads AGVMIGLAWLISFILWAPAILCW. Over 170–191 the chain is Extracellular; it reads QYLVGKRTVPLDECQIQFLSEP. Residues 192–214 form a helical membrane-spanning segment; the sequence is TITFGTAIAAFYIPVSVMTILYC. Topologically, residues 215–443 are cytoplasmic; it reads RIYRETEKRT…LVKERKAAQT (229 aa). The disordered stretch occupies residues 262 to 365; it reads AQRERNQTSW…SDTPNYFLSP (104 aa). Residues 269-281 are compositionally biased toward low complexity; the sequence is TSWSSSRRSASTS. Positions 282-308 are enriched in polar residues; the sequence is GKPSQATDPSTNQAKAEQLTTCSSYPS. The helical transmembrane segment at 444-464 threads the bilayer; it reads LSAILLAFIITWTPYNIMVLV. Residues 465-478 are Extracellular-facing; it reads STFCDKCVPVTLWH. The chain crosses the membrane as a helical span at residues 479 to 498; that stretch reads LGYWLCYVNSTVNPICYALC. The Cytoplasmic portion of the chain corresponds to 499–532; sequence NRTFRKTFKMLLLCRWKKKKVEEKLYWQGNSKLP. Thr-501 and Thr-505 each carry phosphothreonine.

This sequence belongs to the G-protein coupled receptor 1 family. Muscarinic acetylcholine receptor subfamily. CHRM5 sub-subfamily.

It localises to the cell membrane. Its subcellular location is the postsynaptic cell membrane. The muscarinic acetylcholine receptor mediates various cellular responses, including inhibition of adenylate cyclase, breakdown of phosphoinositides and modulation of potassium channels through the action of G proteins. Primary transducing effect is Pi turnover. This Macaca mulatta (Rhesus macaque) protein is Muscarinic acetylcholine receptor M5 (CHRM5).